The primary structure comprises 562 residues: Nucleoprotein (562 aa).

Positions 53 to 238 (MRRERRDDND…ITQEESQINI (186 aa)) are binding site for the cap structure m7GTP. Positions 381 and 383 each coordinate Mn(2+). The Zn(2+) site is built by Glu391, Cys498, His501, and Cys522. Asp526 is a binding site for Mn(2+).

The protein belongs to the arenaviridae nucleocapsid protein family. As to quaternary structure, homomultimerizes to form the nucleocapsid. Binds to viral genomic RNA. Interacts with glycoprotein G2. Interacts with protein Z; this interaction probably directs the encapsidated genome to budding sites. Interacts with protein L; this interaction does not interfere with Z-L interaction. Interacts with host IKBKE (via Protein kinase domain); the interaction inhibits IKBKE kinase activity.

It is found in the virion. The protein resides in the host cytoplasm. Functionally, encapsidates the genome, protecting it from nucleases. The encapsidated genomic RNA is termed the nucleocapsid (NC). Serves as template for viral transcription and replication. The increased presence of protein N in host cell does not seem to trigger the switch from transcription to replication as observed in other negative strain RNA viruses. Through the interaction with host IKBKE, strongly inhibits the phosphorylation and nuclear translocation of host IRF3, a protein involved in interferon activation pathway, leading to the inhibition of interferon-beta and IRF3-dependent promoters activation. Also encodes a functional 3'-5' exoribonuclease that degrades preferentially dsRNA substrates and thereby participates in the suppression of interferon induction. This Tamiami mammarenavirus (isolate Rat/United States/W 10777/1964) (TAMV) protein is Nucleoprotein.